Consider the following 265-residue polypeptide: Tryptophan synthase alpha chain (265 aa).

Catalysis depends on proton acceptor residues Glu-49 and Asp-60.

The protein belongs to the TrpA family. Tetramer of two alpha and two beta chains.

It carries out the reaction (1S,2R)-1-C-(indol-3-yl)glycerol 3-phosphate + L-serine = D-glyceraldehyde 3-phosphate + L-tryptophan + H2O. The protein operates within amino-acid biosynthesis; L-tryptophan biosynthesis; L-tryptophan from chorismate: step 5/5. Its function is as follows. The alpha subunit is responsible for the aldol cleavage of indoleglycerol phosphate to indole and glyceraldehyde 3-phosphate. The polypeptide is Tryptophan synthase alpha chain (Desulfosudis oleivorans (strain DSM 6200 / JCM 39069 / Hxd3) (Desulfococcus oleovorans)).